Here is a 170-residue protein sequence, read N- to C-terminus: 3-isopropylmalate dehydratase small subunit 1 (170 aa).

It belongs to the LeuD family. LeuD type 2 subfamily. As to quaternary structure, heterodimer of LeuC and LeuD.

The enzyme catalyses (2R,3S)-3-isopropylmalate = (2S)-2-isopropylmalate. The protein operates within amino-acid biosynthesis; L-leucine biosynthesis; L-leucine from 3-methyl-2-oxobutanoate: step 2/4. Functionally, catalyzes the isomerization between 2-isopropylmalate and 3-isopropylmalate, via the formation of 2-isopropylmaleate. In Methanopyrus kandleri (strain AV19 / DSM 6324 / JCM 9639 / NBRC 100938), this protein is 3-isopropylmalate dehydratase small subunit 1 (leuD1).